The sequence spans 247 residues: UPF0280 protein MmarC5_0355 (247 aa).

It belongs to the UPF0280 family.

In Methanococcus maripaludis (strain C5 / ATCC BAA-1333), this protein is UPF0280 protein MmarC5_0355.